The sequence spans 135 residues: C-type Lectin CRL (135 aa).

4 disulfides stabilise this stretch: Cys-3/Cys-14, Cys-31/Cys-131, Cys-38/Cys-133, and Cys-106/Cys-123. In terms of domain architecture, C-type lectin spans 10-132 (MNGLCYKIFN…CESKDAFLCQ (123 aa)). Ca(2+) is bound by residues Gln-96, Asp-98, Glu-104, Asn-119, and Asp-120. The Galactose-binding motif lies at 96–98 (QPD).

It belongs to the true venom lectin family. Homodimer; disulfide-linked. As to expression, expressed by the venom gland.

Its subcellular location is the secreted. Functionally, beta-galactoside and N-acetylgalactosamine (GalNAc) specific C-type lectin. This chain is C-type Lectin CRL, found in Crotalus ruber ruber (Red diamond rattlesnake).